Here is a 273-residue protein sequence, read N- to C-terminus: Putative phosphoenolpyruvate synthase regulatory protein (273 aa).

154 to 161 is an ADP binding site; the sequence is GVSRSGKT.

This sequence belongs to the pyruvate, phosphate/water dikinase regulatory protein family. PSRP subfamily.

It carries out the reaction [pyruvate, water dikinase] + ADP = [pyruvate, water dikinase]-phosphate + AMP + H(+). The enzyme catalyses [pyruvate, water dikinase]-phosphate + phosphate + H(+) = [pyruvate, water dikinase] + diphosphate. Bifunctional serine/threonine kinase and phosphorylase involved in the regulation of the phosphoenolpyruvate synthase (PEPS) by catalyzing its phosphorylation/dephosphorylation. In Neisseria meningitidis serogroup B (strain ATCC BAA-335 / MC58), this protein is Putative phosphoenolpyruvate synthase regulatory protein.